Reading from the N-terminus, the 252-residue chain is Imidazole glycerol phosphate synthase subunit HisF (252 aa).

Residues Asp-11 and Asp-130 contribute to the active site.

Belongs to the HisA/HisF family. In terms of assembly, heterodimer of HisH and HisF.

The protein localises to the cytoplasm. The catalysed reaction is 5-[(5-phospho-1-deoxy-D-ribulos-1-ylimino)methylamino]-1-(5-phospho-beta-D-ribosyl)imidazole-4-carboxamide + L-glutamine = D-erythro-1-(imidazol-4-yl)glycerol 3-phosphate + 5-amino-1-(5-phospho-beta-D-ribosyl)imidazole-4-carboxamide + L-glutamate + H(+). The protein operates within amino-acid biosynthesis; L-histidine biosynthesis; L-histidine from 5-phospho-alpha-D-ribose 1-diphosphate: step 5/9. Its function is as follows. IGPS catalyzes the conversion of PRFAR and glutamine to IGP, AICAR and glutamate. The HisF subunit catalyzes the cyclization activity that produces IGP and AICAR from PRFAR using the ammonia provided by the HisH subunit. This chain is Imidazole glycerol phosphate synthase subunit HisF, found in Staphylococcus saprophyticus subsp. saprophyticus (strain ATCC 15305 / DSM 20229 / NCIMB 8711 / NCTC 7292 / S-41).